A 269-amino-acid chain; its full sequence is MNDSLKAQCIAEFLGTGLFLFFGIGCLSALKVAGASLGLWEICIIWGLGISLAVYLTAGISGAHLNPAITIALWLFACFPGRKVLPYTVAQVAGAFGGALLAYLLYGSLFTEYESAHQMVRGSLESLHLASIFSTYPAAALSVWQAALVEVVITSILMGMIMALTDDGNGVPKGPLAPLLIGILVAVIGASTGPLTGFAMNPARDFGPKLFAWMAGWGDVAMTGGRDIPYFIVPIVAPIIGACAGAAIYRYLIGKNLPCNTCKLDENES.

The next 2 helical transmembrane spans lie at 10 to 30 and 42 to 62; these read IAEFLGTGLFLFFGIGCLSAL and ICIIWGLGISLAVYLTAGISG. Residues 66-68 carry the NPA 1 motif; sequence NPA. 3 helical membrane passes run 69-89, 143-163, and 179-199; these read ITIALWLFACFPGRKVLPYTV, VWQAALVEVVITSILMGMIMA, and LLIGILVAVIGASTGPLTGFA. Residues 201–203 carry the NPA 2 motif; it reads NPA. The helical transmembrane segment at 228–248 threads the bilayer; the sequence is IPYFIVPIVAPIIGACAGAAI.

It belongs to the MIP/aquaporin (TC 1.A.8) family.

It is found in the cell inner membrane. In terms of biological role, probably facilitates diffusion of 1,2-propanediol (1,2-PD) into the cell. This is Propanediol uptake facilitator PduF from Citrobacter freundii.